We begin with the raw amino-acid sequence, 148 residues long: Ponticulin-like protein D (148 aa).

An N-terminal signal peptide occupies residues 1-20; that stretch reads MLLNKSLLLLVAFVFAIVSA. N67 carries an N-linked (GlcNAc...) asparagine glycan. A lipid anchor (GPI-like-anchor amidated aspartate) is attached at D125. The propeptide at 126 to 148 is removed in mature form; sequence SSAAATMIASFSAILIALLFALL.

It belongs to the ponticulin family. In terms of processing, the GPI-like-anchor contains a phosphoceramide group, rather than a phosphatidyl group.

It localises to the cell membrane. The polypeptide is Ponticulin-like protein D (ponD) (Dictyostelium discoideum (Social amoeba)).